Reading from the N-terminus, the 30-residue chain is Mejucin (30 aa).

It localises to the secreted. Its function is as follows. Bacteriocin that inhibits the growth of several Gram-positive bacteria, especially the food-borne pathogens L.monocytogenes, B.cereus strain ATCC 11778, B.cereus strain ATCC 21366, B.cereus strain ATCC 10876 and B.cereus strain ATCC 14579. Likely to act by disrupting the pathogen membrane resulting in leakage of intracellular constituents. Does not inhibit the growth of Gram-negative bacteria. This Bacillus subtilis protein is Mejucin.